The primary structure comprises 457 residues: Fibrinogen C domain-containing protein 1-A (457 aa).

Residues 1–20 (MGSDRWKNIGGTPQMEDSAQ) are disordered. Topologically, residues 1 to 33 (MGSDRWKNIGGTPQMEDSAQEKTQRKGCGYILC) are cytoplasmic. A helical; Signal-anchor for type II membrane protein membrane pass occupies residues 34–54 (TVLLSVAVLLAVTVTGAVLFM). Residues 55 to 457 (NHYHAPSTEP…MKIRPQREEN (403 aa)) lie on the Extracellular side of the membrane. Positions 216 to 235 (ADLQRAPSRNSRPRGCANGS) are disordered. In terms of domain architecture, Fibrinogen C-terminal spans 231–454 (CANGSKPRDC…FTEMKIRPQR (224 aa)). A glycan (N-linked (GlcNAc...) asparagine) is linked at asparagine 233. The cysteines at positions 240 and 269 are disulfide-linked. A glycan (N-linked (GlcNAc...) asparagine) is linked at asparagine 336. 2 residues coordinate Ca(2+): aspartate 389 and aspartate 391. A disulfide bridge links cysteine 397 with cysteine 410.

As to quaternary structure, homotetramer; disulfide-linked.

The protein localises to the membrane. In terms of biological role, acetyl group-binding receptor which shows a calcium-dependent binding to acetylated structures such as chitin, some N-acetylated carbohydrates, and amino acids. The polypeptide is Fibrinogen C domain-containing protein 1-A (fibcd1-a) (Xenopus laevis (African clawed frog)).